The primary structure comprises 328 residues: NADH:quinone reductase (328 aa).

FMN is bound by residues Gly-22 to Gln-24, Thr-75, Lys-124, Ala-150, Ser-178 to Gly-180, and Gly-201 to Thr-202.

This sequence belongs to the nitronate monooxygenase family. As to quaternary structure, monomer. FMN is required as a cofactor.

It carries out the reaction a quinone + NADH + H(+) = a quinol + NAD(+). In terms of biological role, catalyzes the NADH-dependent reduction of a broad spectrum of quinone substrates, generating the corresponding hydroquinones. Highly prefers NADH to NADPH as a reducing substrate. Also displays a small NADH oxidase activity. Does not exhibit nitronate monooxygenase activity; is inactive against propionate 3-nitronate, 3-nitropropionate, nitroethane, 1-nitropropane, 2-nitropropane, and the anionic forms ethylnitronate, propyl-1-nitronate, and propyl-2-nitronate. Has no azoreductase activity since it is not able to reduce the azo dye methyl red with NADH. May be required to maintain an appropriate [NAD(+)]/[NADH] ratio for the catabolism of fatty acids in P.aeruginosa PAO1. The protein is NADH:quinone reductase of Pseudomonas aeruginosa (strain ATCC 15692 / DSM 22644 / CIP 104116 / JCM 14847 / LMG 12228 / 1C / PRS 101 / PAO1).